We begin with the raw amino-acid sequence, 500 residues long: Hexokinase-3 (500 aa).

A helical transmembrane segment spans residues 4-24 (VGLGVAVGCAAVTCAIAAALV). The Hexokinase domain maps to 35–487 (RRAVALLREF…SGVGAALLAA (453 aa)). A hexokinase small subdomain region spans residues 90–222 (SGSEEGVYYS…GLNVRVTALV (133 aa)). Positions 104, 105, and 106 each coordinate ADP. The D-glucose site is built by Thr-188, Lys-189, Asn-223, and Asp-224. A hexokinase large subdomain region spans residues 223–476 (NDTVGTLALG…RNVTLRVTED (254 aa)). Ser-247 provides a ligand contact to ADP. D-glucose-binding residues include Asn-250, Glu-278, and Glu-309. ADP is bound at residue Gly-441.

Belongs to the hexokinase family. As to expression, expressed in roots, leaves, flowers, immature seeds and seed coat. Expressed in young shoots, tiller buds, endosperm seven days after fertilization, and interconnecting tissues such as pulvini and nodes.

Its subcellular location is the mitochondrion outer membrane. It catalyses the reaction a D-hexose + ATP = a D-hexose 6-phosphate + ADP + H(+). It carries out the reaction D-fructose + ATP = D-fructose 6-phosphate + ADP + H(+). The catalysed reaction is D-glucose + ATP = D-glucose 6-phosphate + ADP + H(+). It functions in the pathway carbohydrate metabolism; hexose metabolism. It participates in carbohydrate degradation; glycolysis; D-glyceraldehyde 3-phosphate and glycerone phosphate from D-glucose: step 1/4. Functionally, fructose and glucose phosphorylating enzyme. Involved in the regulation of cell expansion in spikelet hulls, grain size, and gibberellin biosynthesis and homeostasis. The chain is Hexokinase-3 from Oryza sativa subsp. japonica (Rice).